The chain runs to 133 residues: Ribonuclease P protein component (133 aa).

Residues 114-133 (RSRPTPEEKSEPAGVDSTDA) are disordered.

Belongs to the RnpA family. In terms of assembly, consists of a catalytic RNA component (M1 or rnpB) and a protein subunit.

It catalyses the reaction Endonucleolytic cleavage of RNA, removing 5'-extranucleotides from tRNA precursor.. In terms of biological role, RNaseP catalyzes the removal of the 5'-leader sequence from pre-tRNA to produce the mature 5'-terminus. It can also cleave other RNA substrates such as 4.5S RNA. The protein component plays an auxiliary but essential role in vivo by binding to the 5'-leader sequence and broadening the substrate specificity of the ribozyme. The chain is Ribonuclease P protein component from Pseudomonas syringae pv. tomato (strain ATCC BAA-871 / DC3000).